Here is a 537-residue protein sequence, read N- to C-terminus: Protein ST7 homolog (537 aa).

The helical transmembrane segment at 15-35 threads the bilayer; that stretch reads FYVALTGTSSLISGLILIFEW. Residues 61-111 form a disordered region; sequence SDGQSESSNGSGSSSSSGSSSSSNGGAGGGGSGGAGASGSGSATTSTGTQM. Residues 67–84 show a composition bias toward low complexity; the sequence is SSNGSGSSSSSGSSSSSN. Gly residues predominate over residues 85–99; it reads GGAGGGGSGGAGASG. Positions 100–109 are enriched in low complexity; that stretch reads SGSATTSTGT. The chain crosses the membrane as a helical span at residues 472 to 492; the sequence is LPFFILFTAGLCSITALLALA.

It belongs to the ST7 family.

It is found in the membrane. This Drosophila melanogaster (Fruit fly) protein is Protein ST7 homolog.